We begin with the raw amino-acid sequence, 116 residues long: NADH-ubiquinone oxidoreductase chain 3 (116 aa).

Transmembrane regions (helical) follow at residues 3–23, 56–76, and 87–107; these read LITT…TVSF, FFLI…LLPL, and LTLV…IYEW.

The protein belongs to the complex I subunit 3 family.

The protein resides in the mitochondrion membrane. The enzyme catalyses a ubiquinone + NADH + 5 H(+)(in) = a ubiquinol + NAD(+) + 4 H(+)(out). Core subunit of the mitochondrial membrane respiratory chain NADH dehydrogenase (Complex I) that is believed to belong to the minimal assembly required for catalysis. Complex I functions in the transfer of electrons from NADH to the respiratory chain. The immediate electron acceptor for the enzyme is believed to be ubiquinone. This chain is NADH-ubiquinone oxidoreductase chain 3 (MT-ND3), found in Oncorhynchus kisutch (Coho salmon).